A 739-amino-acid chain; its full sequence is Lysine decarboxylase (739 aa).

Lys367 bears the N6-(pyridoxal phosphate)lysine mark. Residues 714–726 (ADEPGDKPSDTVK) show a composition bias toward basic and acidic residues. The interval 714 to 739 (ADEPGDKPSDTVKKAPGKKPSAAKKS) is disordered. Residues 728 to 739 (APGKKPSAAKKS) are compositionally biased toward basic residues.

This sequence belongs to the Orn/Lys/Arg decarboxylase class-I family. It depends on pyridoxal 5'-phosphate as a cofactor.

It localises to the cytoplasm. The catalysed reaction is L-lysine + H(+) = cadaverine + CO2. This chain is Lysine decarboxylase, found in Hafnia alvei.